The primary structure comprises 177 residues: ATP synthase subunit delta (177 aa).

Belongs to the ATPase delta chain family. In terms of assembly, F-type ATPases have 2 components, F(1) - the catalytic core - and F(0) - the membrane proton channel. F(1) has five subunits: alpha(3), beta(3), gamma(1), delta(1), epsilon(1). F(0) has three main subunits: a(1), b(2) and c(10-14). The alpha and beta chains form an alternating ring which encloses part of the gamma chain. F(1) is attached to F(0) by a central stalk formed by the gamma and epsilon chains, while a peripheral stalk is formed by the delta and b chains.

It localises to the cell inner membrane. Functionally, f(1)F(0) ATP synthase produces ATP from ADP in the presence of a proton or sodium gradient. F-type ATPases consist of two structural domains, F(1) containing the extramembraneous catalytic core and F(0) containing the membrane proton channel, linked together by a central stalk and a peripheral stalk. During catalysis, ATP synthesis in the catalytic domain of F(1) is coupled via a rotary mechanism of the central stalk subunits to proton translocation. This protein is part of the stalk that links CF(0) to CF(1). It either transmits conformational changes from CF(0) to CF(1) or is implicated in proton conduction. This is ATP synthase subunit delta from Colwellia psychrerythraea (strain 34H / ATCC BAA-681) (Vibrio psychroerythus).